Consider the following 37-residue polypeptide: MVEPLLSGIVLGLIPITLFGLLVAAYLQYQRGNQLGL.

Residues 5–25 (LLSGIVLGLIPITLFGLLVAA) form a helical membrane-spanning segment.

This sequence belongs to the PetG family. The 4 large subunits of the cytochrome b6-f complex are cytochrome b6, subunit IV (17 kDa polypeptide, PetD), cytochrome f and the Rieske protein, while the 4 small subunits are PetG, PetL, PetM and PetN. The complex functions as a dimer.

The protein resides in the plastid. The protein localises to the chloroplast thylakoid membrane. In terms of biological role, component of the cytochrome b6-f complex, which mediates electron transfer between photosystem II (PSII) and photosystem I (PSI), cyclic electron flow around PSI, and state transitions. PetG is required for either the stability or assembly of the cytochrome b6-f complex. This chain is Cytochrome b6-f complex subunit 5, found in Pyropia yezoensis (Susabi-nori).